Consider the following 356-residue polypeptide: Histidinol-phosphate aminotransferase 2 (356 aa).

Position 213 is an N6-(pyridoxal phosphate)lysine (lysine 213).

Belongs to the class-II pyridoxal-phosphate-dependent aminotransferase family. Histidinol-phosphate aminotransferase subfamily. Homodimer. Requires pyridoxal 5'-phosphate as cofactor.

The enzyme catalyses L-histidinol phosphate + 2-oxoglutarate = 3-(imidazol-4-yl)-2-oxopropyl phosphate + L-glutamate. The protein operates within amino-acid biosynthesis; L-histidine biosynthesis; L-histidine from 5-phospho-alpha-D-ribose 1-diphosphate: step 7/9. The protein is Histidinol-phosphate aminotransferase 2 of Burkholderia mallei (strain ATCC 23344).